A 184-amino-acid polypeptide reads, in one-letter code: Ribose 1,5-bisphosphate phosphokinase PhnN (184 aa).

11–18 (GPSGAGKD) is an ATP binding site.

This sequence belongs to the ribose 1,5-bisphosphokinase family.

The enzyme catalyses alpha-D-ribose 1,5-bisphosphate + ATP = 5-phospho-alpha-D-ribose 1-diphosphate + ADP. Its pathway is metabolic intermediate biosynthesis; 5-phospho-alpha-D-ribose 1-diphosphate biosynthesis; 5-phospho-alpha-D-ribose 1-diphosphate from D-ribose 5-phosphate (route II): step 3/3. In terms of biological role, catalyzes the phosphorylation of ribose 1,5-bisphosphate to 5-phospho-D-ribosyl alpha-1-diphosphate (PRPP). This chain is Ribose 1,5-bisphosphate phosphokinase PhnN, found in Burkholderia mallei (strain SAVP1).